A 390-amino-acid chain; its full sequence is 1-acyl-sn-glycerol-3-phosphate acyltransferase 2 (390 aa).

The helical transmembrane segment at 2–22 (AMAAAVIVPLGILFFISGLVV) threads the bilayer. Positions 91 to 96 (HRSDID) match the HXXXXD motif motif. 2 helical membrane passes run 305-325 (LAVV…FLHW) and 333-353 (KGIA…QILI). Positions 358–390 (SERSTPAKVAPAKPKDNHQSGPSSQTEVEEKQK) are disordered.

It belongs to the 1-acyl-sn-glycerol-3-phosphate acyltransferase family.

The protein resides in the endoplasmic reticulum membrane. The enzyme catalyses a 1-acyl-sn-glycero-3-phosphate + an acyl-CoA = a 1,2-diacyl-sn-glycero-3-phosphate + CoA. Its pathway is phospholipid metabolism; CDP-diacylglycerol biosynthesis; CDP-diacylglycerol from sn-glycerol 3-phosphate: step 2/3. Its function is as follows. Converts lysophosphatidic acid (LPA) into phosphatidic acid by incorporating acyl moiety at the 2 position. This Brassica napus (Rape) protein is 1-acyl-sn-glycerol-3-phosphate acyltransferase 2 (LPAT2).